A 643-amino-acid polypeptide reads, in one-letter code: Threonine--tRNA ligase (643 aa).

One can recognise a TGS domain in the interval Met1–Thr61. The interval Asp243–Pro534 is catalytic. Residues Cys334, His385, and His511 each contribute to the Zn(2+) site.

The protein belongs to the class-II aminoacyl-tRNA synthetase family. Homodimer. Zn(2+) is required as a cofactor.

The protein resides in the cytoplasm. It catalyses the reaction tRNA(Thr) + L-threonine + ATP = L-threonyl-tRNA(Thr) + AMP + diphosphate + H(+). Catalyzes the attachment of threonine to tRNA(Thr) in a two-step reaction: L-threonine is first activated by ATP to form Thr-AMP and then transferred to the acceptor end of tRNA(Thr). Also edits incorrectly charged L-seryl-tRNA(Thr). This chain is Threonine--tRNA ligase, found in Mannheimia succiniciproducens (strain KCTC 0769BP / MBEL55E).